The primary structure comprises 156 residues: Cellulose synthase operon protein D (156 aa).

It participates in glycan metabolism; bacterial cellulose biosynthesis. In terms of biological role, may have a major role in the perfection of crystallization, involved either in the pore structure itself or in the organization of the pores within the linear array of terminal synthesizing complexes (TCs). The chain is Cellulose synthase operon protein D from Komagataeibacter xylinus (Gluconacetobacter xylinus).